The primary structure comprises 235 residues: Sugar fermentation stimulation protein homolog (235 aa).

It belongs to the SfsA family.

The polypeptide is Sugar fermentation stimulation protein homolog (Serratia proteamaculans (strain 568)).